The following is a 279-amino-acid chain: uncharacterized protein (279 aa).

Helical transmembrane passes span 31–51, 67–87, and 115–135; these read GYIA…FHAT, LLSI…AKII, and EITG…SLAL.

Belongs to the transketolase family. Thiamine diphosphate serves as cofactor.

It is found in the cell membrane. This is an uncharacterized protein from Sinorhizobium fredii (strain NBRC 101917 / NGR234).